A 379-amino-acid chain; its full sequence is Nematocin receptor 1 (379 aa).

The Extracellular segment spans residues 19 to 48 (HNLYLFQMLELQENITDSQPMDPPSLEIMM). N32 is a glycosylation site (N-linked (GlcNAc...) asparagine). Residues 49-69 (LHHLMIILVTLFGNTLLIYVI) traverse the membrane as a helical segment. At 70–95 (YKNNAVLRRKRVTPVQMLMLHMCAAD) the chain is on the cytoplasmic side. Residues 96–116 (ILFALISVGPTMAITATVPFF) traverse the membrane as a helical segment. At 117–124 (YGPNLLCK) the chain is on the extracellular side. A disulfide bridge connects residues C123 and C196. The chain crosses the membrane as a helical span at residues 125 to 145 (LTKFLQVIPMYASSFLLVAIS). Residues 146–168 (ADRYQAICRPLASMKSSIYNRPA) lie on the Cytoplasmic side of the membrane. The helical transmembrane segment at 169-189 (LYSGIAWTAAILFSTPQLYLF) threads the bilayer. Topologically, residues 190–207 (EKRNGDCSENYTTALQYQ) are extracellular. The N-linked (GlcNAc...) asparagine glycan is linked to N199. Residues 208 to 228 (LYVCLFNSVVWLLPSAIAGWL) form a helical membrane-spanning segment. The Cytoplasmic segment spans residues 229 to 289 (YLCVCKAVWK…DRRRVQTVKL (61 aa)). The helical transmembrane segment at 290-310 (TLTIVAANFVLWAPFCITSVI) threads the bilayer. Topologically, residues 311–320 (DAVWPTAINS) are extracellular. N-linked (GlcNAc...) asparagine glycosylation is present at N319. Residues 321–343 (TFATYIMFFGNLNSCMNPWLWFH) form a helical membrane-spanning segment. Over 344-379 (FNRKQLKRACPCRKSSEPLIQSLVYVHVMTSEQSDF) the chain is Cytoplasmic.

Belongs to the G-protein coupled receptor 1 family. Vasopressin/oxytocin receptor subfamily. In terms of tissue distribution, detected in the left ASE gustatory neuron, the chemosensory neuron pairs ASH and ADF, and the PQR tail neuron. In males, detected in hook and tail sensory neurons involved in vulval sensing and hermaphrodite contact, and in spicule protractor muscles.

Its subcellular location is the cell membrane. Functionally, receptor for nematocin. The activity of this receptor is mediated by G proteins which activate a phosphatidylinositol-calcium second messenger system. The activity of this receptor may be modulated by ntr-2, leading to reduced intracellular cAMP production. Plays a role in gustatory associative learning. Also plays a role in male mating behavior. The polypeptide is Nematocin receptor 1 (Caenorhabditis elegans).